A 634-amino-acid polypeptide reads, in one-letter code: Growth hormone receptor (634 aa).

Residues 1–18 form the signal peptide; sequence MDLWQLLLTLAVAGSSDA. At 19-260 the chain is on the extracellular side; sequence FSGSEATPAF…NPSACEEDFQ (242 aa). The N-linked (GlcNAc...) asparagine glycan is linked to Asn-46. Cys-56 and Cys-66 form a disulfide bridge. N-linked (GlcNAc...) asparagine glycosylation occurs at Asn-73. Cys-97 and Cys-108 are disulfide-bonded. An N-linked (GlcNAc...) asparagine glycan is attached at Asn-111. Cys-122 and Cys-136 are joined by a disulfide. The 104-residue stretch at 147–250 folds into the Fibronectin type-III domain; sequence PPVGLNWTLL…EVLLITFPQM (104 aa). 3 N-linked (GlcNAc...) asparagine glycosylation sites follow: Asn-152, Asn-157, and Asn-196. The WSXWS motif signature appears at 236 to 240; it reads YGKFS. A helical transmembrane segment spans residues 261 to 284; that stretch reads FPWFLIIIFGILGLTVTLFLLIFS. The Cytoplasmic portion of the chain corresponds to 285–634; that stretch reads KQQRIKMLIL…STDQLNKIMP (350 aa). The segment at 290–375 is required for JAK2 binding; sequence KMLILPPVPV…HEKSLSIFGA (86 aa). Positions 293–301 match the Box 1 motif motif; sequence ILPPVPVPK. Positions 336-345 match the UbE motif motif; the sequence is DSWVEFIELD. Ser-337 carries the post-translational modification Phosphoserine. The segment at 451 to 471 is disordered; the sequence is KPRPLPIGGTESTHQAVHTQL. Residues 460–471 are compositionally biased toward polar residues; the sequence is TESTHQAVHTQL. A phosphotyrosine mark is found at Tyr-483 and Tyr-591.

Belongs to the type I cytokine receptor family. Type 1 subfamily. On growth hormone (GH) binding, forms homodimers and binds JAK2 via a box 1-containing domain. Post-translationally, the soluble form (GHBP) is produced by phorbol ester-promoted proteolytic cleavage at the cell surface (shedding) by ADAM17/TACE. Shedding is inhibited by growth hormone (GH) binding to the receptor probably due to a conformational change in GHR rendering the receptor inaccessible to ADAM17. On GH binding, phosphorylated on tyrosine residues in the cytoplasmic domain by JAK2. In terms of processing, ubiquitinated by the ECS(SOCS2) complex following ligand-binding and phosphorylation by JAK2, leading to its degradation by the proteasome. Regulation by the ECS(SOCS2) complex acts as a negative feedback loop of growth hormone receptor signaling. Ubiquitination is not sufficient for GHR internalization.

The protein resides in the cell membrane. Its subcellular location is the secreted. Receptor for pituitary gland growth hormone (GH1) involved in regulating postnatal body growth. On ligand binding, couples to the JAK2/STAT5 pathway. Its function is as follows. The soluble form (GHBP) acts as a reservoir of growth hormone in plasma and may be a modulator/inhibitor of GH signaling. The sequence is that of Growth hormone receptor (GHR) from Ovis aries (Sheep).